The primary structure comprises 517 residues: T-complex protein 11-like protein 2 (517 aa).

A disordered region spans residues 1-59 (MPFNGEKQYVNEDQQSDSESSRFSESTASLSDYGCSRQSFTSDSSSKSSSPASTSPPRG). At Ser-16 the chain carries Phosphoserine. Over residues 17-55 (DSESSRFSESTASLSDYGCSRQSFTSDSSSKSSSPASTS) the composition is skewed to low complexity.

It belongs to the TCP11 family. Interacts with FMNL2; this interaction promotes muscle-derived satellite cell (MDSC) migration and differentiation.

The protein resides in the cytoplasm. The protein localises to the cytoskeleton. Its function is as follows. Promotes the migration of muscle-derived satellite cells (MDSCs) during differentiation throught interaction with FMNL2 and therefore may participate in microfilament assembly. This chain is T-complex protein 11-like protein 2, found in Rattus norvegicus (Rat).